A 224-amino-acid chain; its full sequence is Voltage-dependent calcium channel gamma-1 subunit (224 aa).

Over 1–10 the chain is Cytoplasmic; sequence MSQTKALKVR. Residues 11-29 traverse the membrane as a helical segment; that stretch reads VTLFCILVGIVLALVAVVT. Residues 30–110 are Extracellular-facing; the sequence is DHWAVLSPHV…TQKEYSISAA (81 aa). Asn43 and Asn81 each carry an N-linked (GlcNAc...) asparagine glycan. A disulfide bridge links Cys57 with Cys82. The chain crosses the membrane as a helical span at residues 111–131; sequence AIAIFSLGFIILGTICGLLSF. Topologically, residues 132-136 are cytoplasmic; it reads RKKRD. The helical transmembrane segment at 137–157 threads the bilayer; that stretch reads YLLRPASMFYAFAGLCIFVSV. The Extracellular portion of the chain corresponds to 158–181; it reads EVMRQSVKRMIDSEDTVWIDYYYG. A helical membrane pass occupies residues 182–206; it reads WSFACACAAFILLFLGGIALLLFSL. At 207-224 the chain is on the cytoplasmic side; sequence PRMPQYPWESCMDAEPEH.

This sequence belongs to the PMP-22/EMP/MP20 family. CACNG subfamily. In terms of assembly, component of a calcium channel complex consisting of a pore-forming alpha subunit (CACNA1S) and the ancillary subunits CACNB1 or CACNB2, CACNG1 and CACNA2D1. The channel complex contains alpha, beta, gamma and delta subunits in a 1:1:1:1 ratio, i.e. it contains either CACNB1 or CACNB2. Post-translationally, N-glycosylated.

The protein resides in the cell membrane. It localises to the sarcolemma. Regulatory subunit of the voltage-gated calcium channel that gives rise to L-type calcium currents in skeletal muscle. Regulates channel inactivation kinetics. The protein is Voltage-dependent calcium channel gamma-1 subunit (CACNG1) of Sus scrofa (Pig).